A 1441-amino-acid chain; its full sequence is uncharacterized protein (1441 aa).

13 disordered regions span residues 1–95, 150–204, 224–289, 401–477, 529–661, 680–760, 776–810, 849–899, 980–1118, 1161–1185, 1209–1321, 1348–1402, and 1421–1441; these read MGFL…EVIS, NGGI…QQQF, KPHQ…GEGE, HSNG…QLHQ, RHES…QPQQ, LNKD…KSQT, RKSS…HIQQ, QQQF…TQQL, RGGS…DNNN, KSLK…NENN, NIES…YRSY, GHNS…HIFF, and LKFN…SILE. The span at 19 to 38 shows a compositional bias: low complexity; it reads NDNSFDGGSSSYNNNNNNNN. Residues 39–56 show a composition bias toward polar residues; sequence QPITYTPTAIRSPNNKTM. Composition is skewed to low complexity over residues 57-91, 153-187, 227-283, 416-445, 555-564, and 572-635; these read SQSQ…GNGN, ISQP…TTTP, QQQQ…SLQN, NNNN…GINN, GNTDGVNIDN, and NNNN…TNNT. Positions 636–645 are enriched in polar residues; the sequence is ATPSVINGDS. Composition is skewed to low complexity over residues 648 to 661 and 680 to 700; these read QEQP…QPQQ and LNKD…DDNN. Residues 703–720 are compositionally biased toward basic and acidic residues; it reads SREEMENILKKSQQDSNK. The span at 729–751 shows a compositional bias: polar residues; the sequence is EDSNSGSPTFQDFQSSAAASNVS. 2 stretches are compositionally biased toward low complexity: residues 780–810 and 849–880; these read DSLN…HIQQ and QQQF…NSGS. The span at 881 to 892 shows a compositional bias: gly residues; the sequence is INGGSNSGGGGV. Residues 981 to 994 show a composition bias toward polar residues; it reads GGSTNRTTPPFLTP. A compositionally biased stretch (low complexity) spans 995-1067; sequence NTSQTNLSSL…NKQTANNTTN (73 aa). The segment covering 1068 to 1087 has biased composition (polar residues); that stretch reads DFSFDQNTDLRSSTNSLTIG. The span at 1088-1118 shows a compositional bias: low complexity; it reads SNSNFSSLKNSLNLENPENNNNPDKNVDNNN. Low complexity-rich tracts occupy residues 1225–1249 and 1257–1291; these read DNNN…SLRN and NISN…NNNE. Residues 1362-1373 show a composition bias toward basic and acidic residues; it reads RHKDSIGDKEMD.

This is an uncharacterized protein from Dictyostelium discoideum (Social amoeba).